The primary structure comprises 351 residues: C(7)-cyclitol 7-kinase (351 aa).

It belongs to the ROK (NagC/XylR) family.

The catalysed reaction is valienone + ATP = valienone 7-phosphate + ADP + H(+). The enzyme catalyses validone + ATP = validone 7-phosphate + ADP + H(+). In terms of biological role, involved in the biosynthesis of the antifungal agent validamycin A. Catalyzes the phosphorylation of valienone and validone to their 7-phosphate derivatives. The sequence is that of C(7)-cyclitol 7-kinase from Streptomyces hygroscopicus subsp. limoneus.